The chain runs to 113 residues: Large ribosomal subunit protein uL22 (113 aa).

This sequence belongs to the universal ribosomal protein uL22 family. As to quaternary structure, part of the 50S ribosomal subunit.

Its function is as follows. This protein binds specifically to 23S rRNA; its binding is stimulated by other ribosomal proteins, e.g. L4, L17, and L20. It is important during the early stages of 50S assembly. It makes multiple contacts with different domains of the 23S rRNA in the assembled 50S subunit and ribosome. Functionally, the globular domain of the protein is located near the polypeptide exit tunnel on the outside of the subunit, while an extended beta-hairpin is found that lines the wall of the exit tunnel in the center of the 70S ribosome. In Roseiflexus sp. (strain RS-1), this protein is Large ribosomal subunit protein uL22.